The chain runs to 352 residues: DNA polymerase IV (352 aa).

The UmuC domain maps to 4 to 185 (IIHVDMDCFF…LPLSKIPGVG (182 aa)). D8 and D103 together coordinate Mg(2+). Residue E104 is part of the active site.

This sequence belongs to the DNA polymerase type-Y family. In terms of assembly, monomer. The cofactor is Mg(2+).

It localises to the cytoplasm. The enzyme catalyses DNA(n) + a 2'-deoxyribonucleoside 5'-triphosphate = DNA(n+1) + diphosphate. Functionally, poorly processive, error-prone DNA polymerase involved in untargeted mutagenesis. Copies undamaged DNA at stalled replication forks, which arise in vivo from mismatched or misaligned primer ends. These misaligned primers can be extended by PolIV. Exhibits no 3'-5' exonuclease (proofreading) activity. May be involved in translesional synthesis, in conjunction with the beta clamp from PolIII. This chain is DNA polymerase IV, found in Enterobacter sp. (strain 638).